We begin with the raw amino-acid sequence, 201 residues long: 3-isopropylmalate dehydratase small subunit (201 aa).

This sequence belongs to the LeuD family. LeuD type 1 subfamily. As to quaternary structure, heterodimer of LeuC and LeuD.

It catalyses the reaction (2R,3S)-3-isopropylmalate = (2S)-2-isopropylmalate. It functions in the pathway amino-acid biosynthesis; L-leucine biosynthesis; L-leucine from 3-methyl-2-oxobutanoate: step 2/4. Catalyzes the isomerization between 2-isopropylmalate and 3-isopropylmalate, via the formation of 2-isopropylmaleate. The chain is 3-isopropylmalate dehydratase small subunit from Glaesserella parasuis serovar 5 (strain SH0165) (Haemophilus parasuis).